The following is a 91-amino-acid chain: Small ribosomal subunit protein uS19 (91 aa).

It belongs to the universal ribosomal protein uS19 family.

In terms of biological role, protein S19 forms a complex with S13 that binds strongly to the 16S ribosomal RNA. In Ralstonia pickettii (strain 12J), this protein is Small ribosomal subunit protein uS19.